We begin with the raw amino-acid sequence, 477 residues long: MDLFLYNTLSREKERFLPVNDPVKLYTCGPTVYDYAHIGNFRTYIFEDLLKRVLLFLGYSVYHVMNITDVDDKTLAGARKKGCSLEKYCQPYIHAFFADLETLHILKADAYPHATHYIPQMIEAIQQLINQGVAYIGQDQSVYFSISQFPNYGALSHLNLEELRNSARIDADEYDKDNLCDFVLWKAYDPDRDGEIFWESPFGKGRPGWHLECSIMSISLLGQSLDIHAGGVDNIFPHHENEIAQSESLSHKPFVRYWLHSHHLLVDRKKMSKSLGNFFTLRDLLDQGFSGEEVRYLLLQGHYRTQLNFTQEGLHASRQSLKRLRDFICRLEDPSYPDDIIHPEVATACQSFLETFITSLTNDLNISSSLAALFDFIRKINSSIDQHTGIQTETDSSVFSKQDAQHILALLRKIDQVLGVLPFSQPDIPEEVLLLVEQREAARKVKNWQEADRLRDEILSRSFAIEDGKTGMKVKKL.

Cys28 contacts Zn(2+). A 'HIGH' region motif is present at residues 30–40; it reads PTVYDYAHIGN. Zn(2+)-binding residues include Cys213, His238, and Glu242. The short motif at 270-274 is the 'KMSKS' region element; it reads KMSKS. Lys273 provides a ligand contact to ATP.

Belongs to the class-I aminoacyl-tRNA synthetase family. As to quaternary structure, monomer. Requires Zn(2+) as cofactor.

It is found in the cytoplasm. It carries out the reaction tRNA(Cys) + L-cysteine + ATP = L-cysteinyl-tRNA(Cys) + AMP + diphosphate. The chain is Cysteine--tRNA ligase (cysS) from Chlamydia trachomatis serovar D (strain ATCC VR-885 / DSM 19411 / UW-3/Cx).